The chain runs to 288 residues: Eukaryotic translation initiation factor 3 subunit F-2 (288 aa).

Residues 12-149 (VLLHPLVLFQ…TRIFCAVATG (138 aa)) enclose the MPN domain.

Belongs to the eIF-3 subunit F family. As to quaternary structure, component of the eukaryotic translation initiation factor 3 (eIF-3) complex. The eIF-3 complex interacts with pix.

The protein resides in the cytoplasm. Functionally, component of the eukaryotic translation initiation factor 3 (eIF-3) complex, which is involved in protein synthesis of a specialized repertoire of mRNAs and, together with other initiation factors, stimulates binding of mRNA and methionyl-tRNAi to the 40S ribosome. The eIF-3 complex specifically targets and initiates translation of a subset of mRNAs involved in cell proliferation. This is Eukaryotic translation initiation factor 3 subunit F-2 from Drosophila persimilis (Fruit fly).